A 260-amino-acid chain; its full sequence is Acyl-coenzyme A diphosphatase FITM2 (260 aa).

Residues 1-23 lie on the Cytoplasmic side of the membrane; it reads MERLENCAQMFQRKFLNEAFRRH. A helical membrane pass occupies residues 24 to 44; sequence CPVLLACIALGGSLLKELSPL. The Lumenal segment spans residues 45-57; sequence PDSYWNNKRNVLN. A helical transmembrane segment spans residues 58-78; that stretch reads VYFVKFCWGWTLWLLLPFITL. Topologically, residues 79–93 are cytoplasmic; it reads TNYKLTGSITKVLRR. A helical membrane pass occupies residues 94-114; that stretch reads LSSLLVGTLFWYLCTNLFLYI. The Lumenal segment spans residues 115 to 144; the sequence is EHITGSCYESEALLDSIEHQDRKECRLHGG. Residues 145-165 form a helical membrane-spanning segment; the sequence is FWHGFDISGHCFLLSYCILII. The active site involves His-154. At 166–189 the chain is on the cytoplasmic side; that stretch reads LEETSVIRSIQFERHWHRMAINAQ. Helical transmembrane passes span 190 to 210 and 211 to 231; these read FTAL…TAVY and FHNI…WYIT. His-212 is an active-site residue. Topologically, residues 232–260 are cytoplasmic; that stretch reads YRWWYLQPISPGLPPASASHSEKEPVYKN.

The protein belongs to the FIT family. FIT2 subfamily.

It localises to the endoplasmic reticulum membrane. It catalyses the reaction an acyl-CoA + H2O = an acyl-4'-phosphopantetheine + adenosine 3',5'-bisphosphate + 2 H(+). Functionally, fatty acyl-coenzyme A (CoA) diphosphatase that hydrolyzes fatty acyl-CoA to yield acyl-4'-phosphopantetheine and adenosine 3',5'-bisphosphate. Preferentially hydrolyzes unsaturated long-chain acyl-CoA substrates in the endoplasmic reticulum (ER) lumen. This catalytic activity is required for maintaining ER structure and for lipid droplets (LDs) biogenesis, which are lipid storage organelles involved in maintaining lipid and energy homeostasis. May directly bind to diacylglycerol (DAGs) and triacylglycerol, which is also important for LD biogenesis. May support directional budding of nacent LDs from the ER into the cytosol by reducing DAG levels at sites of LD formation. May play a role in the regulation of cell morphology, ER morphology and cytoskeletal organization. The chain is Acyl-coenzyme A diphosphatase FITM2 from Xenopus laevis (African clawed frog).